Here is a 223-residue protein sequence, read N- to C-terminus: RNA-free ribonuclease P (223 aa).

The protein belongs to the HARP family.

It carries out the reaction Endonucleolytic cleavage of RNA, removing 5'-extranucleotides from tRNA precursor.. RNA-free RNase P that catalyzes the removal of the 5'-leader sequence from pre-tRNA to produce the mature 5'-terminus. This is RNA-free ribonuclease P from Methanococcus maripaludis (strain DSM 14266 / JCM 13030 / NBRC 101832 / S2 / LL).